The primary structure comprises 101 residues: UPF0473 protein LAF_0524 (101 aa).

Belongs to the UPF0473 family.

This Limosilactobacillus fermentum (strain NBRC 3956 / LMG 18251) (Lactobacillus fermentum) protein is UPF0473 protein LAF_0524.